Reading from the N-terminus, the 191-residue chain is Cytochrome c oxidase assembly protein CtaG (191 aa).

Residues 1–9 (MSLSPHQKT) are Cytoplasmic-facing. A helical; Signal-anchor for type II membrane protein transmembrane segment spans residues 10 to 30 (AGGLVLVVAVMGAASFAAVPF). Topologically, residues 31–191 (YNWFCRVTGF…LAAESATDVN (161 aa)) are periplasmic.

The protein belongs to the COX11/CtaG family.

Its subcellular location is the cell inner membrane. In terms of biological role, exerts its effect at some terminal stage of cytochrome c oxidase synthesis, probably by being involved in the insertion of the copper B into subunit I. This Cereibacter sphaeroides (strain ATCC 17029 / ATH 2.4.9) (Rhodobacter sphaeroides) protein is Cytochrome c oxidase assembly protein CtaG.